Reading from the N-terminus, the 291-residue chain is N-acetylmannosamine kinase (291 aa).

Residues alanine 5 to lysine 12 and glycine 132 to cysteine 139 each bind ATP. Zn(2+) is bound by residues histidine 156, cysteine 166, cysteine 168, and cysteine 173.

It belongs to the ROK (NagC/XylR) family. NanK subfamily. Homodimer.

The enzyme catalyses an N-acyl-D-mannosamine + ATP = an N-acyl-D-mannosamine 6-phosphate + ADP + H(+). It functions in the pathway amino-sugar metabolism; N-acetylneuraminate degradation; D-fructose 6-phosphate from N-acetylneuraminate: step 2/5. In terms of biological role, catalyzes the phosphorylation of N-acetylmannosamine (ManNAc) to ManNAc-6-P. This is N-acetylmannosamine kinase from Salmonella typhi.